The chain runs to 316 residues: Probable inactive poly [ADP-ribose] polymerase SRO4 (316 aa).

The segment at 1 to 28 (MDYSKTEETPINEEQGSTNSSESRSNEE) is disordered. Low complexity predominate over residues 14 to 23 (EQGSTNSSES). Positions 28-255 (ELFSDCDQQH…KSPWISFPVL (228 aa)) constitute a PARP catalytic domain. An RST domain is found at 243 to 314 (KNPKSPWISF…IKSVGQKVHK (72 aa)).

Its subcellular location is the nucleus. Functionally, probable inactive ADP-ribosyltransferase that may be involved in stress and developmental responses. The chain is Probable inactive poly [ADP-ribose] polymerase SRO4 (SRO4) from Arabidopsis thaliana (Mouse-ear cress).